Here is a 70-residue protein sequence, read N- to C-terminus: Large ribosomal subunit protein bL28 (70 aa).

The protein belongs to the bacterial ribosomal protein bL28 family.

The chain is Large ribosomal subunit protein bL28 from Maridesulfovibrio salexigens (strain ATCC 14822 / DSM 2638 / NCIMB 8403 / VKM B-1763) (Desulfovibrio salexigens).